Reading from the N-terminus, the 140-residue chain is Nucleoside diphosphate kinase (140 aa).

Residues K11, F59, R87, T93, R104, and N114 each coordinate ATP. H117 serves as the catalytic Pros-phosphohistidine intermediate.

Belongs to the NDK family. In terms of assembly, homotetramer. Mg(2+) serves as cofactor.

It localises to the cytoplasm. The enzyme catalyses a 2'-deoxyribonucleoside 5'-diphosphate + ATP = a 2'-deoxyribonucleoside 5'-triphosphate + ADP. It catalyses the reaction a ribonucleoside 5'-diphosphate + ATP = a ribonucleoside 5'-triphosphate + ADP. Major role in the synthesis of nucleoside triphosphates other than ATP. The ATP gamma phosphate is transferred to the NDP beta phosphate via a ping-pong mechanism, using a phosphorylated active-site intermediate. This chain is Nucleoside diphosphate kinase, found in Rickettsia felis (strain ATCC VR-1525 / URRWXCal2) (Rickettsia azadi).